The primary structure comprises 210 residues: Probable GTP-binding protein EngB (210 aa).

One can recognise an EngB-type G domain in the interval 25 to 199 (CGIEVAFAGR…RQKLDSWFSE (175 aa)). Residues 33–40 (GRSNAGKS), 60–64 (GRTQL), 78–81 (DLPG), 145–148 (TKAD), and 178–180 (FSS) contribute to the GTP site. The Mg(2+) site is built by serine 40 and threonine 62.

The protein belongs to the TRAFAC class TrmE-Era-EngA-EngB-Septin-like GTPase superfamily. EngB GTPase family. Mg(2+) serves as cofactor.

In terms of biological role, necessary for normal cell division and for the maintenance of normal septation. This is Probable GTP-binding protein EngB from Salmonella agona (strain SL483).